The sequence spans 472 residues: 3-isopropylmalate dehydratase large subunit (472 aa).

3 residues coordinate [4Fe-4S] cluster: Cys347, Cys407, and Cys410.

Belongs to the aconitase/IPM isomerase family. LeuC type 1 subfamily. In terms of assembly, heterodimer of LeuC and LeuD. Requires [4Fe-4S] cluster as cofactor.

It catalyses the reaction (2R,3S)-3-isopropylmalate = (2S)-2-isopropylmalate. Its pathway is amino-acid biosynthesis; L-leucine biosynthesis; L-leucine from 3-methyl-2-oxobutanoate: step 2/4. In terms of biological role, catalyzes the isomerization between 2-isopropylmalate and 3-isopropylmalate, via the formation of 2-isopropylmaleate. The sequence is that of 3-isopropylmalate dehydratase large subunit from Bacillus licheniformis (strain ATCC 14580 / DSM 13 / JCM 2505 / CCUG 7422 / NBRC 12200 / NCIMB 9375 / NCTC 10341 / NRRL NRS-1264 / Gibson 46).